We begin with the raw amino-acid sequence, 600 residues long: ATP-dependent RNA helicase DDX55 (600 aa).

A Q motif motif is present at residues 9–37; sequence WESLPVPLHPQVLGALRELGFPYMTPVQS. The 184-residue stretch at 40-223 folds into the Helicase ATP-binding domain; that stretch reads IPLFMRNKDV…RAGLRNPVRV (184 aa). 53 to 60 contacts ATP; that stretch reads AVTGSGKT. Residues 171–174 carry the DEAD box motif; it reads DEAD. Positions 254–402 constitute a Helicase C-terminal domain; it reads KFNQLVHFLR…EMKPQRNTAD (149 aa). Positions 500–513 are enriched in basic and acidic residues; the sequence is EQQRREKTENEGRR. The tract at residues 500-550 is disordered; that stretch reads EQQRREKTENEGRRKFIKNKAWSKQKAKKEKKKKMNEKRKREEGSDIEDED. The span at 514-537 shows a compositional bias: basic residues; the sequence is KFIKNKAWSKQKAKKEKKKKMNEK. The interval 533–562 is important for nuclear localization; it reads KMNEKRKREEGSDIEDEDMEELLNDTRLLK. Phosphoserine occurs at positions 544 and 594.

It belongs to the DEAD box helicase family. DDX55/SPB4 subfamily. As to quaternary structure, interacts with 28S rRNA. Interacts with double-stranded RNA substrates in vitro; the interaction stimulates ATPase activity.

It is found in the nucleus. The protein localises to the nucleoplasm. The enzyme catalyses ATP + H2O = ADP + phosphate + H(+). In terms of biological role, probable ATP-binding RNA helicase. Has ATPase activity and is involved in the maturation of precursor large subunit rRNAs. The protein is ATP-dependent RNA helicase DDX55 of Homo sapiens (Human).